The primary structure comprises 208 residues: Protein-L-isoaspartate O-methyltransferase (208 aa).

Serine 59 is an active-site residue.

Belongs to the methyltransferase superfamily. L-isoaspartyl/D-aspartyl protein methyltransferase family.

The protein localises to the cytoplasm. It catalyses the reaction [protein]-L-isoaspartate + S-adenosyl-L-methionine = [protein]-L-isoaspartate alpha-methyl ester + S-adenosyl-L-homocysteine. Functionally, catalyzes the methyl esterification of L-isoaspartyl residues in peptides and proteins that result from spontaneous decomposition of normal L-aspartyl and L-asparaginyl residues. It plays a role in the repair and/or degradation of damaged proteins. This Escherichia coli (strain K12 / MC4100 / BW2952) protein is Protein-L-isoaspartate O-methyltransferase.